An 866-amino-acid chain; its full sequence is Protein SEY1 (866 aa).

Over 1-746 the chain is Cytoplasmic; it reads MVSNGHFAYA…KRSAIGGMTQ (746 aa). Residues 48–305 form the GB1/RHD3-type G domain; it reads GFNYHLISVF…IPADGFAVYA (258 aa). Position 58–65 (58–65) interacts with GTP; it reads GSQSTGKS. Positions 480-506 form a coiled coil; it reads SNYTQELALYQKDLEKISAQLRKDEMR. Residues 747 to 767 form a helical membrane-spanning segment; it reads IPVYFYILLLALGWNEIIAVL. Over 768–770 the chain is Lumenal; it reads RNP. Residues 771–791 traverse the membrane as a helical segment; it reads VYFFMLFLCSVAAYIIYQLNL. Residues 792-866 are Cytoplasmic-facing; the sequence is WGPMVKMAEA…DDEVEGEETW (75 aa). Positions 840–866 are disordered; it reads SHVRSGRNATKINERDDDDEVEGEETW. The segment covering 854–866 has biased composition (acidic residues); sequence RDDDDEVEGEETW.

It belongs to the TRAFAC class dynamin-like GTPase superfamily. GB1/RHD3 GTPase family. RHD3 subfamily.

Its subcellular location is the endoplasmic reticulum membrane. Functionally, cooperates with the reticulon proteins and tubule-shaping DP1 family proteins to generate and maintain the structure of the tubular endoplasmic reticulum network. Has GTPase activity, which is required for its function in ER organization. The protein is Protein SEY1 of Coccidioides immitis (strain RS) (Valley fever fungus).